Here is a 118-residue protein sequence, read N- to C-terminus: DNA-binding protein MmarC5_1518 (118 aa).

The span at 1-12 (MNPEEIRQRRLQ) shows a compositional bias: basic and acidic residues. The interval 1–35 (MNPEEIRQRRLQEMQAKAQEQGAEDPEAQRQAQEQ) is disordered.

The protein belongs to the PDCD5 family.

This Methanococcus maripaludis (strain C5 / ATCC BAA-1333) protein is DNA-binding protein MmarC5_1518.